The chain runs to 342 residues: Paired box protein Pax-9 (342 aa).

The segment at residues 4–130 (AFGEVNQLGG…SSISRILRNK (127 aa)) is a DNA-binding region (paired). Residues 7-63 (EVNQLGGVFVNGRPLPNAIRLRIVELAQLGIRPCDISRQLRVSHGCVSKILARYNET) form a PAI subdomain region. Residues 82 to 130 (TVVKHIRTYKQRDPGIFAWEIRDRLLADGVCDKYNVPSVSSISRILRNK) form an RED subdomain region. Positions 168-189 (AAAAKVPTPPGVPAIPGSVALP) are interaction with KDM5B.

Interacts with KDM5B.

The protein localises to the nucleus. Transcription factor required for normal development of thymus, parathyroid glands, ultimobranchial bodies, teeth, skeletal elements of skull and larynx as well as distal limbs. The polypeptide is Paired box protein Pax-9 (Rattus norvegicus (Rat)).